Here is a 393-residue protein sequence, read N- to C-terminus: Lipid-A-disaccharide synthase (393 aa).

It belongs to the LpxB family.

It carries out the reaction a lipid X + a UDP-2-N,3-O-bis[(3R)-3-hydroxyacyl]-alpha-D-glucosamine = a lipid A disaccharide + UDP + H(+). The protein operates within bacterial outer membrane biogenesis; LPS lipid A biosynthesis. Functionally, condensation of UDP-2,3-diacylglucosamine and 2,3-diacylglucosamine-1-phosphate to form lipid A disaccharide, a precursor of lipid A, a phosphorylated glycolipid that anchors the lipopolysaccharide to the outer membrane of the cell. This is Lipid-A-disaccharide synthase from Bordetella petrii (strain ATCC BAA-461 / DSM 12804 / CCUG 43448).